Consider the following 626-residue polypeptide: Transketolase-like protein 2 (626 aa).

His37 serves as a coordination point for substrate. Residues Ser40, His77, and 123–125 (GSL) each bind thiamine diphosphate. Asp155 contacts Mg(2+). Residues Gly156 and Asn185 each coordinate thiamine diphosphate. 2 residues coordinate Mg(2+): Asn185 and Leu187. Thiamine diphosphate-binding residues include Lys247 and His261. The substrate site is built by His261 and Ser348. Residues Glu369 and Phe395 each coordinate thiamine diphosphate. The Proton donor role is filled by Glu369. Residues His419 and Asp427 each contribute to the substrate site. Gln431 provides a ligand contact to thiamine diphosphate. A substrate-binding site is contributed by Arg477.

Belongs to the transketolase family. In terms of assembly, homodimer. Mg(2+) is required as a cofactor. Ca(2+) serves as cofactor. The cofactor is Mn(2+). Requires Co(2+) as cofactor. It depends on thiamine diphosphate as a cofactor.

It catalyses the reaction D-sedoheptulose 7-phosphate + D-glyceraldehyde 3-phosphate = aldehydo-D-ribose 5-phosphate + D-xylulose 5-phosphate. Its function is as follows. Plays an essential role in total transketolase activity and cell proliferation in cancer cells; after transfection with anti-TKTL1 siRNA, total transketolase activity dramatically decreases and proliferation was significantly inhibited in cancer cells. Plays a pivotal role in carcinogenesis. The protein is Transketolase-like protein 2 (TKTL2) of Bos taurus (Bovine).